A 429-amino-acid polypeptide reads, in one-letter code: Adenylosuccinate synthetase (429 aa).

Residues 12 to 18 (GDEGKGK) and 40 to 42 (GHT) contribute to the GTP site. The active-site Proton acceptor is Asp-13. Mg(2+) is bound by residues Asp-13 and Gly-40. Residues 13–16 (DEGK), 38–41 (NAGH), Thr-129, Arg-143, Gln-224, Thr-239, and Arg-303 contribute to the IMP site. His-41 acts as the Proton donor in catalysis. 299–305 (ATTGRRR) lines the substrate pocket. Residues Arg-305, 331–333 (KLD), and 413–415 (SVG) each bind GTP.

Belongs to the adenylosuccinate synthetase family. Homodimer. Mg(2+) is required as a cofactor.

It is found in the cytoplasm. It carries out the reaction IMP + L-aspartate + GTP = N(6)-(1,2-dicarboxyethyl)-AMP + GDP + phosphate + 2 H(+). It functions in the pathway purine metabolism; AMP biosynthesis via de novo pathway; AMP from IMP: step 1/2. Plays an important role in the de novo pathway of purine nucleotide biosynthesis. Catalyzes the first committed step in the biosynthesis of AMP from IMP. In Desulforapulum autotrophicum (strain ATCC 43914 / DSM 3382 / VKM B-1955 / HRM2) (Desulfobacterium autotrophicum), this protein is Adenylosuccinate synthetase.